Here is a 348-residue protein sequence, read N- to C-terminus: Trace amine-associated receptor 9 (348 aa).

At 1-33 (MVNNFSQAEAVELCYKNVNESCIKTPYSPGPRS) the chain is on the extracellular side. 2 N-linked (GlcNAc...) asparagine glycosylation sites follow: N4 and N19. 2 cysteine pairs are disulfide-bonded: C22-C186 and C105-C190. Residues 34–58 (ILYAVLGFGAVLAAFGNLLVMIAIL) traverse the membrane as a helical segment. The Cytoplasmic segment spans residues 59 to 68 (HFKQLHTPTN). A helical membrane pass occupies residues 69–90 (FLIASLACADFLVGVTVMPFST). Topologically, residues 91–105 (VRSVESCWYFGDSYC) are extracellular. The helical transmembrane segment at 106–128 (KFHTCFDTSFCFASLFHLCCISV) threads the bilayer. Positions 112 and 113 each coordinate spermidine. Topologically, residues 129–148 (DRYIAVTDPLTYPTKFTVSV) are cytoplasmic. The chain crosses the membrane as a helical span at residues 149 to 170 (SGICIVLSWFFSVTYSFSIFYT). At 171–196 (GANEEGIEELVVALTCVGGCQAPLNQ) the chain is on the extracellular side. The segment at 174–187 (EEGIEELVVALTCV) is extracellular Loop 2 (ECL2). The helical transmembrane segment at 197-218 (NWVLLCFLLFFIPNVAMVFIYS) threads the bilayer. The Cytoplasmic segment spans residues 219–256 (KIFLVAKHQARKIESTASQAQSSSESYKERVAKRERKA). The helical transmembrane segment at 257–280 (AKTLGIAMAAFLVSWLPYLVDAVI) threads the bilayer. At 281–293 (DAYMNFITPPYVY) the chain is on the extracellular side. A helical transmembrane segment spans residues 294-314 (EILVWCVYYNSAMNPLIYAFF). Residues 315–348 (YQWFGKAIKLIVSGKVLRTDSSTTNLFSEEVETD) are Cytoplasmic-facing.

The protein belongs to the G-protein coupled receptor 1 family.

Its subcellular location is the cell membrane. Its function is as follows. Olfactory receptor specific for trace amines, such as N,N-dimethylcyclohexylamine (DMCHA) and beta-phenylethylamine (beta-PEA). In contrast to mouse and rat orthologs, not activated by triethylamine, cadaverine (CAD) or spermidine. Trace amine compounds are enriched in animal body fluids and act on trace amine-associated receptors (TAARs) to elicit both intraspecific and interspecific innate behaviors. Trace amine-binding causes a conformation change that triggers signaling via G(s)-class of G alpha proteins (GNAL or GNAS). In mature olfactory sensory neurons, TAAR9 is coupled with GNAL/G(olf)G alpha protein and mediates activation of adenylate cyclase activity to activate cAMP signaling and eventually transmit odorant signals to achieve membrane depolarization. In immature olfactory sensory neurons, TAAR9 is coupled with GNAS/G(s) G alpha proteins. This Homo sapiens (Human) protein is Trace amine-associated receptor 9.